Reading from the N-terminus, the 833-residue chain is Glycerol-3-phosphate acyltransferase (833 aa).

The short motif at 310–315 (HRSHID) is the HXXXXD motif element.

This sequence belongs to the GPAT/DAPAT family.

Its subcellular location is the cell inner membrane. It carries out the reaction sn-glycerol 3-phosphate + an acyl-CoA = a 1-acyl-sn-glycero-3-phosphate + CoA. It participates in phospholipid metabolism; CDP-diacylglycerol biosynthesis; CDP-diacylglycerol from sn-glycerol 3-phosphate: step 1/3. The polypeptide is Glycerol-3-phosphate acyltransferase (Pseudomonas syringae pv. tomato (strain ATCC BAA-871 / DC3000)).